We begin with the raw amino-acid sequence, 359 residues long: MLPPDILQNGEFETIYFQTNPTYIKSPIHIPKSTIGKPDTVKIRHFFALLHQDLVVLGLEVFVYLQIYSDFVEKYVYVSKCDTVGLEKSTIKIGKVIGPVLQYIINYNGYKIKMKNLDEKSKDLSDPSTLVRLQRLRDKLPDIYPNLPYYNDIPPKEECIEYRTLPKTQNLRLCVFTKPAKEYLFPNSAKNPYKNLLNGQSLLRWWISIIDSITKGWNNHKLMIPGADKYATRKFIEKYSDWSEGHIFKKDGLAVQAIPLFPDDPKGRFLELVIVECRYGKMTVSRFYQELAYRQEFLLGDCVSLIGCCKENLEVTYHDDSVSTVTISEYKEFMNSLKSVDFSDRVEVSNFVSNYRKSK.

The Rtt109-type HAT domain maps to 1 to 359; that stretch reads MLPPDILQNG…NFVSNYRKSK (359 aa). Acetyl-CoA contacts are provided by residues Phe-176, Ala-180, 195–197, and Trp-205; that span reads NLL. Residue Asp-264 is the Proton donor/acceptor of the active site. Lys-266 carries the N6-acetyllysine; by autocatalysis modification.

This sequence belongs to the RTT109 family.

It is found in the nucleus. It catalyses the reaction L-lysyl-[histone] + acetyl-CoA = N(6)-acetyl-L-lysyl-[histone] + CoA + H(+). In terms of biological role, histone chaperone-dependent acetylase that modifies 'Lys-56' of histone H3 (H3K56ac), to promote genomic stability, DNA repair and transcriptional regulation during mitotic S-phase. Plays an important role in the regulation of white-opaque genotoxin induced-switching. The sequence is that of Histone acetyltransferase RTT109 (RTT109) from Candida albicans (strain SC5314 / ATCC MYA-2876) (Yeast).